The following is a 205-amino-acid chain: Proteasome subunit beta type-3 (205 aa).

The protein belongs to the peptidase T1B family. As to quaternary structure, the 26S proteasome consists of a 20S proteasome core and two 19S regulatory subunits. The 20S proteasome core is composed of 28 subunits that are arranged in four stacked rings, resulting in a barrel-shaped structure. The two end rings are each formed by seven alpha subunits, and the two central rings are each formed by seven beta subunits. The catalytic chamber with the active sites is on the inside of the barrel.

The protein resides in the cytoplasm. It localises to the nucleus. Functionally, non-catalytic component of the proteasome, a multicatalytic proteinase complex which is characterized by its ability to cleave peptides with Arg, Phe, Tyr, Leu, and Glu adjacent to the leaving group at neutral or slightly basic pH. The proteasome has an ATP-dependent proteolytic activity. The chain is Proteasome subunit beta type-3 (psmb3) from Oncorhynchus mykiss (Rainbow trout).